We begin with the raw amino-acid sequence, 167 residues long: Urease accessory protein UreE (167 aa).

The interval Ser-135–Gln-167 is disordered. Residues Lys-157–Gln-167 show a composition bias toward basic residues.

This sequence belongs to the UreE family.

Its subcellular location is the cytoplasm. In terms of biological role, involved in urease metallocenter assembly. Binds nickel. Probably functions as a nickel donor during metallocenter assembly. The chain is Urease accessory protein UreE from Nitrosococcus oceani (strain ATCC 19707 / BCRC 17464 / JCM 30415 / NCIMB 11848 / C-107).